Here is a 298-residue protein sequence, read N- to C-terminus: CD-NTase-associated protein 6 (298 aa).

Residues 80–85 and 204–205 each bind ATP; these read GTGKTA and RR.

The protein belongs to the AAA ATPase family. In terms of assembly, homohexamer, forms a 1:1:6 CdnC:Cap7:Cap6 complex.

Its function is as follows. Regulates complex assembly in a CBASS antivirus system. CBASS (cyclic oligonucleotide-based antiphage signaling system) provides immunity against bacteriophage. The CD-NTase protein synthesizes cyclic nucleotides in response to infection; these serve as specific second messenger signals. The signals activate a diverse range of effectors, leading to bacterial cell death and thus abortive phage infection. A type III CBASS system. Expression of this CBASS system (Cap18-Cap6-Cap7-CdnC-CapW-Cap17) in a susceptible E.coli (strain MG1655) confers resistance to bacteriophage P1. Binds and disassembles an active CdnC:Cap7 complex, inhibiting the complex's ability to synthesize cyclic nucleotide second messengers. An AAA+-ATPase remodeler, in the absence of foreign threat Cap6 probably maintains the Cap7 protein in its open, inactive state. Once activated (presumably by a bacteriophage protein) Cap7 binds to and activates its cognate CD-NTase (CdnC in this bacteria) to synthesize a cyclic nucleotide second messenger which leads to abortive phage infection. This chain is CD-NTase-associated protein 6, found in Escherichia coli (strain KTE188).